Consider the following 264-residue polypeptide: Ribosomal RNA small subunit methyltransferase A (264 aa).

Residues N12, L14, G40, E61, D86, and N105 each contribute to the S-adenosyl-L-methionine site.

This sequence belongs to the class I-like SAM-binding methyltransferase superfamily. rRNA adenine N(6)-methyltransferase family. RsmA subfamily.

The protein localises to the cytoplasm. It carries out the reaction adenosine(1518)/adenosine(1519) in 16S rRNA + 4 S-adenosyl-L-methionine = N(6)-dimethyladenosine(1518)/N(6)-dimethyladenosine(1519) in 16S rRNA + 4 S-adenosyl-L-homocysteine + 4 H(+). In terms of biological role, specifically dimethylates two adjacent adenosines (A1518 and A1519) in the loop of a conserved hairpin near the 3'-end of 16S rRNA in the 30S particle. May play a critical role in biogenesis of 30S subunits. This chain is Ribosomal RNA small subunit methyltransferase A, found in Fusobacterium nucleatum subsp. nucleatum (strain ATCC 25586 / DSM 15643 / BCRC 10681 / CIP 101130 / JCM 8532 / KCTC 2640 / LMG 13131 / VPI 4355).